Consider the following 240-residue polypeptide: 31 kDa outer-membrane immunogenic protein (240 aa).

An N-terminal signal peptide occupies residues 1 to 19; it reads MKSVILASIAAMFATSAMA. An epitope recognized by the monoclonal antibody A59/10F09/G10 region spans residues 48–83; that stretch reads NAGYAGGKFKHPFSSFDKEDNEQVSGSLDVTAGGFV.

Belongs to the Omp25/RopB family. In terms of assembly, oligomeric.

The protein resides in the cell outer membrane. Its function is as follows. Major outer membrane protein associated with peptidoglycans. May function as a porin. The protein is 31 kDa outer-membrane immunogenic protein (omp31) of Brucella melitensis biotype 1 (strain ATCC 23456 / CCUG 17765 / NCTC 10094 / 16M).